An 87-amino-acid chain; its full sequence is MNKSNFFLLLAVCVSAFSVVMQQNQYRLNFTALDKAKKQEIALEQDYAQMRLQQARLANHEAIRAAAEKQNLHPPVSGNTFMVEHQR.

Over 1-6 (MNKSNF) the chain is Cytoplasmic. Residues 7-23 (FLLLAVCVSAFSVVMQQ) traverse the membrane as a helical segment. Over 24-87 (NQYRLNFTAL…GNTFMVEHQR (64 aa)) the chain is Periplasmic. Residues 31-71 (TALDKAKKQEIALEQDYAQMRLQQARLANHEAIRAAAEKQN) adopt a coiled-coil conformation. Positions 68 to 87 (EKQNLHPPVSGNTFMVEHQR) are disordered.

It belongs to the FtsL family. As to quaternary structure, part of a complex composed of FtsB, FtsL and FtsQ.

The protein resides in the cell inner membrane. Its function is as follows. Essential cell division protein. May link together the upstream cell division proteins, which are predominantly cytoplasmic, with the downstream cell division proteins, which are predominantly periplasmic. In Neisseria gonorrhoeae (strain ATCC 700825 / FA 1090), this protein is Cell division protein FtsL.